Here is a 279-residue protein sequence, read N- to C-terminus: Pantothenate synthetase (279 aa).

27 to 34 contacts ATP; sequence MGYLHEGH. The active-site Proton donor is His-34. Gln-58 lines the (R)-pantoate pocket. Gln-58 is a beta-alanine binding site. Position 144 to 147 (144 to 147) interacts with ATP; that stretch reads GKKD. Gln-150 provides a ligand contact to (R)-pantoate. ATP is bound by residues Val-173 and 181–184; that span reads MSSR.

Belongs to the pantothenate synthetase family. In terms of assembly, homodimer.

Its subcellular location is the cytoplasm. The enzyme catalyses (R)-pantoate + beta-alanine + ATP = (R)-pantothenate + AMP + diphosphate + H(+). Its pathway is cofactor biosynthesis; (R)-pantothenate biosynthesis; (R)-pantothenate from (R)-pantoate and beta-alanine: step 1/1. Its function is as follows. Catalyzes the condensation of pantoate with beta-alanine in an ATP-dependent reaction via a pantoyl-adenylate intermediate. In Geobacter sp. (strain M21), this protein is Pantothenate synthetase.